The primary structure comprises 513 residues: ATP synthase subunit alpha (513 aa).

Residue 169 to 176 (GDRQTGKT) participates in ATP binding.

This sequence belongs to the ATPase alpha/beta chains family. F-type ATPases have 2 components, CF(1) - the catalytic core - and CF(0) - the membrane proton channel. CF(1) has five subunits: alpha(3), beta(3), gamma(1), delta(1), epsilon(1). CF(0) has three main subunits: a(1), b(2) and c(9-12). The alpha and beta chains form an alternating ring which encloses part of the gamma chain. CF(1) is attached to CF(0) by a central stalk formed by the gamma and epsilon chains, while a peripheral stalk is formed by the delta and b chains.

The protein resides in the cell inner membrane. The enzyme catalyses ATP + H2O + 4 H(+)(in) = ADP + phosphate + 5 H(+)(out). Produces ATP from ADP in the presence of a proton gradient across the membrane. The alpha chain is a regulatory subunit. In Shewanella sp. (strain MR-4), this protein is ATP synthase subunit alpha.